The following is a 181-amino-acid chain: Organelle RRM domain-containing protein 6, chloroplastic (181 aa).

The transit peptide at 1–44 (MAISLGRVVVPSCTISGDRLFIPNFSAICSVSCGRINVGTGVIS) directs the protein to the chloroplast. Residues 77-155 (TKLYVSGLSF…RVIFVEEAKT (79 aa)) form the RRM domain. The span at 155-169 (TRSDMSRAKPRRDFP) shows a compositional bias: basic and acidic residues. The disordered stretch occupies residues 155–181 (TRSDMSRAKPRRDFPKPQSKPRTFRTW).

Interacts with MORF8/RIP1, MORF2/RIP2, MORF9/RIP9 and VAR3/OZ1.

Its subcellular location is the plastid. It localises to the chloroplast. Involved in C-to-U editing of chloroplastic RNA. Required for the photosynthetic subunit psbF transcript editing in chloroplast. The sequence is that of Organelle RRM domain-containing protein 6, chloroplastic from Arabidopsis thaliana (Mouse-ear cress).